The following is a 117-amino-acid chain: Immunoglobulin heavy variable 5-10-1 (117 aa).

Residues 1 to 19 (MGSTAILALLLAVLQGVCA) form the signal peptide. Residues 20–44 (EVQLVQSGAEVKKPGESLRISCKGS) are framework-1. The Ig-like domain maps to 20–117 (EVQLVQSGAE…SDTAMYYCAR (98 aa)). Cys-41 and Cys-115 are joined by a disulfide. Residues 45 to 52 (GYSFTSYW) form a complementarity-determining-1 region. The interval 53–69 (ISWVRQMPGKGLEWMGR) is framework-2. A complementarity-determining-2 region spans residues 70-77 (IDPSDSYT). A framework-3 region spans residues 78-115 (NYSPSFQGHVTISADKSISTAYLQWSSLKASDTAMYYC). The tract at residues 116–117 (AR) is complementarity-determining-3.

In terms of assembly, immunoglobulins are composed of two identical heavy chains and two identical light chains; disulfide-linked.

Its subcellular location is the secreted. It localises to the cell membrane. V region of the variable domain of immunoglobulin heavy chains that participates in the antigen recognition. Immunoglobulins, also known as antibodies, are membrane-bound or secreted glycoproteins produced by B lymphocytes. In the recognition phase of humoral immunity, the membrane-bound immunoglobulins serve as receptors which, upon binding of a specific antigen, trigger the clonal expansion and differentiation of B lymphocytes into immunoglobulins-secreting plasma cells. Secreted immunoglobulins mediate the effector phase of humoral immunity, which results in the elimination of bound antigens. The antigen binding site is formed by the variable domain of one heavy chain, together with that of its associated light chain. Thus, each immunoglobulin has two antigen binding sites with remarkable affinity for a particular antigen. The variable domains are assembled by a process called V-(D)-J rearrangement and can then be subjected to somatic hypermutations which, after exposure to antigen and selection, allow affinity maturation for a particular antigen. This is Immunoglobulin heavy variable 5-10-1 from Homo sapiens (Human).